The primary structure comprises 121 residues: Small ribosomal subunit protein uS13 (121 aa).

The segment at 91–121 is disordered; the sequence is HRRGLPVRGQNTKNNARTRKGPSKTVAGKKK. Positions 106 to 121 are enriched in basic residues; that stretch reads ARTRKGPSKTVAGKKK.

It belongs to the universal ribosomal protein uS13 family. Part of the 30S ribosomal subunit. Forms a loose heterodimer with protein S19. Forms two bridges to the 50S subunit in the 70S ribosome.

Functionally, located at the top of the head of the 30S subunit, it contacts several helices of the 16S rRNA. In the 70S ribosome it contacts the 23S rRNA (bridge B1a) and protein L5 of the 50S subunit (bridge B1b), connecting the 2 subunits; these bridges are implicated in subunit movement. Contacts the tRNAs in the A and P-sites. This Listeria welshimeri serovar 6b (strain ATCC 35897 / DSM 20650 / CCUG 15529 / CIP 8149 / NCTC 11857 / SLCC 5334 / V8) protein is Small ribosomal subunit protein uS13.